We begin with the raw amino-acid sequence, 399 residues long: MSIRYIDEIENLSGKKLFMRVDFNVPLDDHQNITEDTRIRAVLPSINYALDQKAKIILASHLGRPKGERKEKYSMAPAAKRLSRLLGKEVKLASDCIGDEVKAMINAMQPGDVIMLENVRFYAGEEKNDADFAKALANDCDVYVNDAFAVSHRAHASVEAITNCFPVVAAGFLMKNEMNYFEKAMKNPIRPLVAILGGAKVSGKIEVLENLCDKVDKIIIGGGMAFTFLKGMGYNVGKSLVEDNLIDTAMKTYEKARAQGVKFYLPVDCVVADQFNPAAETKVCPIQEIPEGWMALDVGPATVTLFTEALQNAKTIVWNGPMGVFEMDAFSRGTFAMVSAVANSYALTIVGGGDTDVAVHRAGEYAKISYISTGGGAFLELLEGKKLPGIKVLEDKGHQ.

Substrate contacts are provided by residues 22 to 24, Arg38, 61 to 64, Arg120, and Arg153; these read DFN and HLGR. Residues Lys204, Glu326, and 352–355 contribute to the ATP site; that span reads GGDT.

The protein belongs to the phosphoglycerate kinase family. Monomer.

The protein localises to the cytoplasm. It catalyses the reaction (2R)-3-phosphoglycerate + ATP = (2R)-3-phospho-glyceroyl phosphate + ADP. The protein operates within carbohydrate degradation; glycolysis; pyruvate from D-glyceraldehyde 3-phosphate: step 2/5. This chain is Phosphoglycerate kinase, found in Citrifermentans bemidjiense (strain ATCC BAA-1014 / DSM 16622 / JCM 12645 / Bem) (Geobacter bemidjiensis).